The chain runs to 185 residues: Elongation factor P (185 aa).

It belongs to the elongation factor P family.

Its subcellular location is the cytoplasm. It participates in protein biosynthesis; polypeptide chain elongation. In terms of biological role, involved in peptide bond synthesis. Stimulates efficient translation and peptide-bond synthesis on native or reconstituted 70S ribosomes in vitro. Probably functions indirectly by altering the affinity of the ribosome for aminoacyl-tRNA, thus increasing their reactivity as acceptors for peptidyl transferase. The polypeptide is Elongation factor P (Deinococcus radiodurans (strain ATCC 13939 / DSM 20539 / JCM 16871 / CCUG 27074 / LMG 4051 / NBRC 15346 / NCIMB 9279 / VKM B-1422 / R1)).